The sequence spans 1758 residues: Collagen alpha-2(IV) chain (1758 aa).

An N-terminal signal peptide occupies residues 1–26; the sequence is MKQRAALGPVLRLAILALLAVSYVQS. Positions 27–42 are 7S domain; that stretch reads QATCRDCSNRGCFCVG. Residues 42–1527 are triple-helical region; it reads GEKGSMGAPG…PGAPGAAGPA (1486 aa). Residues 47-62 show a composition bias toward low complexity; that stretch reads MGAPGPQGPPGTQGIR. Disordered regions lie at residues 47–943, 955–1304, 1316–1339, and 1367–1525; these read MGAP…GAPG, GVPG…GLPG, GFPG…DGLP, and GFPG…GAAG. Residues 102–111 show a composition bias toward gly residues; sequence GNDGGNGRPG. The segment covering 134–149 has biased composition (pro residues); that stretch reads PGRPGPPGMPGFPGPP. Positions 189 to 198 are enriched in basic and acidic residues; it reads YPGEKGDRGD. Over residues 224-234 the composition is skewed to low complexity; it reads PKGDPGDLGSV. The O-linked (Xyl...) (glycosaminoglycan) serine glycan is linked to S248. The span at 258 to 267 shows a compositional bias: basic and acidic residues; that stretch reads PGEKGDKGEP. Over residues 268 to 283 the composition is skewed to gly residues; sequence GEGGQRGYPGNGGLSG. Pro residues predominate over residues 367 to 382; sequence PGPPGLPGRPGNPGPP. A compositionally biased stretch (gly residues) spans 398 to 407; sequence GNTGGPGLPG. 2 stretches are compositionally biased toward low complexity: residues 408 to 417 and 429 to 439; these read YPGNEGLPGP and APGVSGPSGIP. Positions 464–479 are enriched in basic and acidic residues; it reads KDGKPGLDGAPGRKGE. Low complexity-rich tracts occupy residues 495-509 and 568-584; these read GLPG…PGPN and PVGD…AGRP. Residues 638–648 are compositionally biased toward pro residues; it reads PSGPVGPPGAP. Gly residues-rich tracts occupy residues 693–702, 737–746, and 782–791; these read GAKGDGGLPG, GTKGEGGYPG, and GDKGFGGVPG. Residues 839 to 858 are compositionally biased toward low complexity; that stretch reads LPGLPGTPGLEGQRGFPGAP. Residues 859–868 are compositionally biased toward gly residues; it reads GLKGGDGLPG. Low complexity predominate over residues 929-938; that stretch reads APGQSGAPGL. Residues 958–967 are compositionally biased toward gly residues; that stretch reads GFKGDGGLPG. Residues 968–980 are compositionally biased toward low complexity; that stretch reads LPGLNGPKGEPGV. The span at 988–997 shows a compositional bias: gly residues; sequence GMKGNGGLPG. A compositionally biased stretch (low complexity) spans 1040-1056; the sequence is LPGQPGLRGPQGPSGLP. The span at 1194-1203 shows a compositional bias: gly residues; the sequence is GLPGLGGEKG. Low complexity predominate over residues 1237-1250; the sequence is FPGQPGQEGLPGLS. The span at 1251-1260 shows a compositional bias: gly residues; sequence GEKGMGGLPG. Over residues 1373-1382 the composition is skewed to gly residues; sequence GLKGEGGLPG. Composition is skewed to low complexity over residues 1413 to 1425 and 1433 to 1454; these read LPGR…ADGP and GPQN…APGL. Composition is skewed to gly residues over residues 1492–1501 and 1507–1516; these read GEKGMGGLPG and GQPGGPGAPG. The Collagen IV NC1 domain occupies 1531-1754; that stretch reads GFVLVKHSQT…SRCQVCVKST (224 aa). Intrachain disulfides connect C1546–C1635, C1579–C1632, C1591–C1597, C1654–C1750, C1688–C1747, and C1700–C1707.

The protein belongs to the type IV collagen family. Trimers of two alpha 1(IV) and one alpha 2(IV) chain. Type IV collagen forms a mesh-like network linked through intermolecular interactions between 7S domains and between NC1 domains. Post-translationally, prolines at the third position of the tripeptide repeating unit (G-X-Y) are hydroxylated in some or all of the chains. Type IV collagens contain numerous cysteine residues which are involved in inter- and intramolecular disulfide bonding. 12 of these, located in the NC1 domain, are conserved in all known type IV collagens. In terms of processing, the trimeric structure of the NC1 domains is stabilized by covalent bonds between Lys and Met residues. As to expression, localizes to the basement membrane between distal tip cells and the germline. Localizes to the intestinal basement membrane.

The protein localises to the secreted. It localises to the extracellular space. Its subcellular location is the extracellular matrix. The protein resides in the basement membrane. Functionally, collagen type IV is specific for basement membranes. Together with fbl-1 and downstream of metalloprotease mig-17, recruits nidogen nid-1 to the gonad basement membrane thereby probably inducing basement membrane remodeling required for the directional migration of distal tip cells. Required to restrict presynaptic growth at the neuromuscular junctions in late larval stage and in adult motor neurons. Vital for embryonic development. This Caenorhabditis elegans protein is Collagen alpha-2(IV) chain.